The following is a 612-amino-acid chain: Vitamin B12 transporter BtuB (612 aa).

The signal sequence occupies residues 1–20 (MIKKSLLCTALSVTAFSGWA). The short motif at 26–33 (DTLVVTAN) is the TonB box element. A TBDR plug domain is found at 38–152 (PRSAVLAPIT…IGGVVNIITT (115 aa)). Cyanocob(III)alamin-binding positions include Ser-85, Asn-92, and 110 to 111 (VS). The region spanning 155 to 612 (KPGTELTAGV…EYTLSGSYTF (458 aa)) is the TBDR beta-barrel domain. The next 3 membrane-spanning stretches (beta stranded) occupy residues 158 to 165 (TELTAGVG), 169 to 178 (YQNYDVSTQQ), and 184 to 195 (TRVTLMGDYAYT). 4 residues coordinate Ca(2+): Asp-199, Gln-211, Asp-213, and Asp-215. 2 beta stranded membrane passes run 217–227 (FLSKTLYGALE) and 232–248 (DTWS…NRTN). Ca(2+) contacts are provided by Tyr-249, Asp-250, and Asp-261. 14 beta stranded membrane passes run 263-277 (RKLY…LRFN), 279-296 (ELIQ…KDYN), 309-325 (TLDE…NSIV), 328-337 (HGNVGAGVDW), 353-369 (YDQR…QQLG), 371-381 (FTFEGAARSDD), 385-400 (FGRH…WEFI), 403-417 (YRFI…KAPN), 434-443 (QSKQWEGAFE), 449-458 (VNWRVSGYRN), 473-490 (YFNE…TANF), 494-509 (PLAH…SRNA), 517-529 (RRSK…QLDW), and 535-550 (DWGL…YDTD). Cyanocob(III)alamin is bound at residue Thr-309. Arg-517 serves as a coordination point for cyanocob(III)alamin. Residue Tyr-551 coordinates cyanocob(III)alamin. Transmembrane regions (beta stranded) follow at residues 556–570 (PVKM…LAVS), 583–594 (IANRFDKDYETV), and 600–612 (AGRE…SYTF). The TonB C-terminal box motif lies at 595–612 (YGYATAGREYTLSGSYTF).

It belongs to the TonB-dependent receptor family. BtuB (TC 1.B.14.3.1) subfamily.

It is found in the cell outer membrane. Its function is as follows. Involved in the active translocation of vitamin B12 (cyanocobalamin) across the outer membrane to the periplasmic space. It derives its energy for transport by interacting with the trans-periplasmic membrane protein TonB. The chain is Vitamin B12 transporter BtuB from Citrobacter freundii.